The chain runs to 397 residues: 1-deoxy-D-xylulose 5-phosphate reductoisomerase (397 aa).

6 residues coordinate NADPH: threonine 10, glycine 11, serine 12, isoleucine 13, glutamine 38, and asparagine 123. Lysine 124 is a binding site for 1-deoxy-D-xylulose 5-phosphate. Residue glutamate 125 participates in NADPH binding. Aspartate 149 is a Mn(2+) binding site. 1-deoxy-D-xylulose 5-phosphate contacts are provided by serine 150, glutamate 151, serine 185, and histidine 208. Mn(2+) is bound at residue glutamate 151. Glycine 214 provides a ligand contact to NADPH. 1-deoxy-D-xylulose 5-phosphate is bound by residues serine 221, asparagine 226, lysine 227, and glutamate 230. A Mn(2+)-binding site is contributed by glutamate 230.

It belongs to the DXR family. Requires Mg(2+) as cofactor. Mn(2+) is required as a cofactor.

The enzyme catalyses 2-C-methyl-D-erythritol 4-phosphate + NADP(+) = 1-deoxy-D-xylulose 5-phosphate + NADPH + H(+). The protein operates within isoprenoid biosynthesis; isopentenyl diphosphate biosynthesis via DXP pathway; isopentenyl diphosphate from 1-deoxy-D-xylulose 5-phosphate: step 1/6. Its function is as follows. Catalyzes the NADPH-dependent rearrangement and reduction of 1-deoxy-D-xylulose-5-phosphate (DXP) to 2-C-methyl-D-erythritol 4-phosphate (MEP). The sequence is that of 1-deoxy-D-xylulose 5-phosphate reductoisomerase from Idiomarina loihiensis (strain ATCC BAA-735 / DSM 15497 / L2-TR).